The following is a 148-amino-acid chain: Endoribonuclease YbeY (148 aa).

3 residues coordinate Zn(2+): H113, H117, and H123.

It belongs to the endoribonuclease YbeY family. The cofactor is Zn(2+).

Its subcellular location is the cytoplasm. Single strand-specific metallo-endoribonuclease involved in late-stage 70S ribosome quality control and in maturation of the 3' terminus of the 16S rRNA. The polypeptide is Endoribonuclease YbeY (Borrelia recurrentis (strain A1)).